Consider the following 229-residue polypeptide: Putative N-acetylmannosamine-6-phosphate 2-epimerase (229 aa).

The protein belongs to the NanE family.

The enzyme catalyses an N-acyl-D-glucosamine 6-phosphate = an N-acyl-D-mannosamine 6-phosphate. It participates in amino-sugar metabolism; N-acetylneuraminate degradation; D-fructose 6-phosphate from N-acetylneuraminate: step 3/5. Functionally, converts N-acetylmannosamine-6-phosphate (ManNAc-6-P) to N-acetylglucosamine-6-phosphate (GlcNAc-6-P). The polypeptide is Putative N-acetylmannosamine-6-phosphate 2-epimerase (Cutibacterium acnes (strain DSM 16379 / KPA171202) (Propionibacterium acnes)).